Here is a 156-residue protein sequence, read N- to C-terminus: ATP synthase subunit b (156 aa).

Residues 13–33 (AFIIFVWFCMKFVWPPLMNAI) form a helical membrane-spanning segment.

This sequence belongs to the ATPase B chain family. F-type ATPases have 2 components, F(1) - the catalytic core - and F(0) - the membrane proton channel. F(1) has five subunits: alpha(3), beta(3), gamma(1), delta(1), epsilon(1). F(0) has three main subunits: a(1), b(2) and c(10-14). The alpha and beta chains form an alternating ring which encloses part of the gamma chain. F(1) is attached to F(0) by a central stalk formed by the gamma and epsilon chains, while a peripheral stalk is formed by the delta and b chains.

It is found in the cell inner membrane. Functionally, f(1)F(0) ATP synthase produces ATP from ADP in the presence of a proton or sodium gradient. F-type ATPases consist of two structural domains, F(1) containing the extramembraneous catalytic core and F(0) containing the membrane proton channel, linked together by a central stalk and a peripheral stalk. During catalysis, ATP synthesis in the catalytic domain of F(1) is coupled via a rotary mechanism of the central stalk subunits to proton translocation. Its function is as follows. Component of the F(0) channel, it forms part of the peripheral stalk, linking F(1) to F(0). In Shewanella woodyi (strain ATCC 51908 / MS32), this protein is ATP synthase subunit b.